A 234-amino-acid chain; its full sequence is Zinc finger FYVE domain-containing protein 21 (234 aa).

Residues 44–104 (DKECPRCMQC…QCADCALVSH (61 aa)) form an FYVE-type zinc finger. Zn(2+) contacts are provided by Cys-50, Cys-53, Cys-66, Cys-69, Cys-74, Cys-77, Cys-96, and Cys-99. The segment at 107-234 (AEFYDKQLKV…TKLLYESRDQ (128 aa)) is PH-like.

Interacts with PTK2/FAK1. Widely expressed.

The protein localises to the cell junction. Its subcellular location is the focal adhesion. The protein resides in the cytoplasmic vesicle. It is found in the endosome. In terms of biological role, plays a role in cell adhesion, and thereby in cell motility which requires repeated formation and disassembly of focal adhesions. Regulates microtubule-induced PTK2/FAK1 dephosphorylation, an event important for focal adhesion disassembly, as well as integrin beta-1/ITGB1 cell surface expression. The protein is Zinc finger FYVE domain-containing protein 21 (Zfyve21) of Mus musculus (Mouse).